A 386-amino-acid polypeptide reads, in one-letter code: Chaperone protein DnaJ (386 aa).

Positions 6 to 70 (DYYEVLGVDK…QKRAAYDQYG (65 aa)) constitute a J domain. The CR-type zinc-finger motif lies at 141 to 223 (GKDTEVSYKR…CHGTGHEKKT (83 aa)). 8 residues coordinate Zn(2+): Cys-154, Cys-157, Cys-171, Cys-174, Cys-197, Cys-200, Cys-211, and Cys-214. 4 CXXCXGXG motif repeats span residues 154 to 161 (CHTCGGNG), 171 to 178 (CHKCKGSG), 197 to 204 (CDVCHGTG), and 211 to 218 (CETCHGTG). Residues 363-386 (LTGQSTEEQQSEGFFDKMKDAFKK) are disordered. Over residues 364–374 (TGQSTEEQQSE) the composition is skewed to polar residues. The segment covering 376 to 386 (FFDKMKDAFKK) has biased composition (basic and acidic residues).

This sequence belongs to the DnaJ family. As to quaternary structure, homodimer. Zn(2+) serves as cofactor.

It localises to the cytoplasm. Functionally, participates actively in the response to hyperosmotic and heat shock by preventing the aggregation of stress-denatured proteins and by disaggregating proteins, also in an autonomous, DnaK-independent fashion. Unfolded proteins bind initially to DnaJ; upon interaction with the DnaJ-bound protein, DnaK hydrolyzes its bound ATP, resulting in the formation of a stable complex. GrpE releases ADP from DnaK; ATP binding to DnaK triggers the release of the substrate protein, thus completing the reaction cycle. Several rounds of ATP-dependent interactions between DnaJ, DnaK and GrpE are required for fully efficient folding. Also involved, together with DnaK and GrpE, in the DNA replication of plasmids through activation of initiation proteins. This is Chaperone protein DnaJ from Tetragenococcus halophilus (Pediococcus halophilus).